Here is a 636-residue protein sequence, read N- to C-terminus: Putative ankyrin repeat protein L766 (636 aa).

11 ANK repeats span residues 63 to 97 (NNYL…DYEL), 99 to 129 (STCH…YIDS), 130 to 159 (FGNI…FFNC), 161 to 190 (YYYL…KSNN), 230 to 259 (FDEK…NYDF), 261 to 284 (TIIN…YLTD), 322 to 355 (SRII…KTSI), 372 to 400 (NPDE…NIPD), 425 to 455 (DSLE…DTTI), 517 to 546 (NSIE…NDNN), and 548 to 575 (LSWA…DIYQ).

In Acanthamoeba polyphaga mimivirus (APMV), this protein is Putative ankyrin repeat protein L766.